A 244-amino-acid polypeptide reads, in one-letter code: Cell division protein ZapD (244 aa).

It belongs to the ZapD family. As to quaternary structure, interacts with FtsZ.

Its subcellular location is the cytoplasm. Functionally, cell division factor that enhances FtsZ-ring assembly. Directly interacts with FtsZ and promotes bundling of FtsZ protofilaments, with a reduction in FtsZ GTPase activity. The protein is Cell division protein ZapD of Shewanella oneidensis (strain ATCC 700550 / JCM 31522 / CIP 106686 / LMG 19005 / NCIMB 14063 / MR-1).